The following is a 327-amino-acid chain: Protoheme IX farnesyltransferase (327 aa).

8 helical membrane passes run 35–55 (LIPL…GWPL), 60–80 (LVCT…LNCL), 106–126 (SAFI…VSGV), 129–149 (LAAG…TALL), 157–177 (IVIG…AATG), 185–205 (WLFA…ALLL), 234–254 (GWIT…GGAF), and 283–303 (AKAL…LLIL).

The protein belongs to the UbiA prenyltransferase family. Protoheme IX farnesyltransferase subfamily.

The protein localises to the cell inner membrane. It carries out the reaction heme b + (2E,6E)-farnesyl diphosphate + H2O = Fe(II)-heme o + diphosphate. The protein operates within porphyrin-containing compound metabolism; heme O biosynthesis; heme O from protoheme: step 1/1. Functionally, converts heme B (protoheme IX) to heme O by substitution of the vinyl group on carbon 2 of heme B porphyrin ring with a hydroxyethyl farnesyl side group. This chain is Protoheme IX farnesyltransferase, found in Synechococcus sp. (strain CC9605).